Here is a 49-residue protein sequence, read N- to C-terminus: Osteocalcin (49 aa).

Residues 1–47 form the Gla domain; that stretch reads YLDHGLGAPAPYPDPLEPRREVCELNPDCDELADHIGFQEAYRRFYG. Position 9 is a hydroxyproline (P9). The Ca(2+) site is built by E17, E21, E24, and D30. 4-carboxyglutamate occurs at positions 17, 21, and 24. Residues C23 and C29 are joined by a disulfide bond.

The protein belongs to the osteocalcin/matrix Gla protein family. In terms of processing, gamma-carboxyglutamate residues are formed by vitamin K dependent carboxylation by GGCX. These residues are essential for the binding of calcium. Decarboxylation promotes the hormone activity.

It is found in the secreted. The carboxylated form is one of the main organic components of the bone matrix, which constitutes 1-2% of the total bone protein. It acts as a negative regulator of bone formation and is required to limit bone formation without impairing bone resorption or mineralization. The carboxylated form binds strongly to apatite and calcium. Functionally, the uncarboxylated form acts as a hormone secreted by osteoblasts, which regulates different cellular processes, such as energy metabolism, male fertility and brain development. Regulates of energy metabolism by acting as a hormone favoring pancreatic beta-cell proliferation, insulin secretion and sensitivity and energy expenditure. Uncarboxylated osteocalcin hormone also promotes testosterone production in the testes: acts as a ligand for G protein-coupled receptor GPRC6A at the surface of Leydig cells, initiating a signaling response that promotes the expression of enzymes required for testosterone synthesis in a CREB-dependent manner. Also acts as a regulator of brain development: osteocalcin hormone crosses the blood-brain barrier and acts as a ligand for GPR158 on neurons, initiating a signaling response that prevents neuronal apoptosis in the hippocampus, favors the synthesis of all monoamine neurotransmitters and inhibits that of gamma-aminobutyric acid (GABA). Osteocalcin also crosses the placenta during pregnancy and maternal osteocalcin is required for fetal brain development. In Sus scrofa (Pig), this protein is Osteocalcin (BGLAP).